The following is a 260-amino-acid chain: Protein TONNEAU 1a (260 aa).

The region spanning 73 to 105 (SGRLLSALICEYLDWAQLNHTLIVYQPESNLPK) is the LisH domain. Disordered regions lie at residues 147–224 (TQGM…EEVT) and 236–260 (DRKTRNLTSSWRNVRDGTNEEEGRD). Residues 161 to 175 (ESSSSLESRNPPRRS) are compositionally biased toward low complexity. The span at 248–260 (NVRDGTNEEEGRD) shows a compositional bias: basic and acidic residues.

In terms of assembly, interacts with CEN1, LNG1/TRM2 and LNG2/TRM1 (via C-terminus).

The protein localises to the cytoplasm. Its subcellular location is the cytoskeleton. Functionally, involved in the control of the dynamic organization of the cortical cytoskeleton. May play a role in the organization of microtubule arrays at the centrosome through interaction with centrin 1 (CEN1). This is Protein TONNEAU 1a (TON1A) from Arabidopsis thaliana (Mouse-ear cress).